A 581-amino-acid polypeptide reads, in one-letter code: Amino-acid acetyltransferase, mitochondrial (581 aa).

In terms of domain architecture, N-acetyltransferase spans 401–558; it reads FTLHNLIEDE…RIVGSEAVNI (158 aa).

This sequence belongs to the acetyltransferase family.

Its subcellular location is the mitochondrion. The enzyme catalyses L-glutamate + acetyl-CoA = N-acetyl-L-glutamate + CoA + H(+). It functions in the pathway amino-acid biosynthesis; L-arginine biosynthesis; N(2)-acetyl-L-ornithine from L-glutamate: step 1/4. In terms of biological role, N-acetylglutamate synthase involved in arginine biosynthesis. This chain is Amino-acid acetyltransferase, mitochondrial (ARG2), found in Scheffersomyces stipitis (strain ATCC 58785 / CBS 6054 / NBRC 10063 / NRRL Y-11545) (Yeast).